Reading from the N-terminus, the 131-residue chain is Sec-independent protein translocase protein TatB (131 aa).

A helical transmembrane segment spans residues 2–22; it reads FDGIGFMELLLIGIVGLVVLG. A compositionally biased stretch (polar residues) spans 86–95; the sequence is LKEAAQSVNR. Residues 86-131 are disordered; it reads LKEAAQSVNRPYQVEDVPAAKDVPAKEMPTSETSTATNANSDKPNG. Positions 115–131 are enriched in low complexity; sequence TSETSTATNANSDKPNG.

Belongs to the TatB family. The Tat system comprises two distinct complexes: a TatABC complex, containing multiple copies of TatA, TatB and TatC subunits, and a separate TatA complex, containing only TatA subunits. Substrates initially bind to the TatABC complex, which probably triggers association of the separate TatA complex to form the active translocon.

It localises to the cell inner membrane. Functionally, part of the twin-arginine translocation (Tat) system that transports large folded proteins containing a characteristic twin-arginine motif in their signal peptide across membranes. Together with TatC, TatB is part of a receptor directly interacting with Tat signal peptides. TatB may form an oligomeric binding site that transiently accommodates folded Tat precursor proteins before their translocation. This chain is Sec-independent protein translocase protein TatB, found in Shewanella halifaxensis (strain HAW-EB4).